Consider the following 241-residue polypeptide: Alkylated DNA repair protein ALKBH6 homolog (241 aa).

Residues Ala-87–Pro-232 enclose the Fe2OG dioxygenase domain. Positions 105, 107, and 181 each coordinate Fe cation. 2-oxoglutarate contacts are provided by Arg-223 and Arg-229.

It belongs to the alkB family. Fe(2+) is required as a cofactor.

Its subcellular location is the nucleus. In terms of biological role, probable RNA demethylase that binds to both N6-methyladenosine-containing- (m(6)A) and C5-methylcytidine-containing- (m(5)C) RNAs, thus being a probable m(6)A and m(5)C eraser. Involved in responses to abscisic acid (ABA) via the modulation of the expression of ABA signaling-related genes (e.g. ABI3 and ABI4). Acts as a negative regulator during seed germination under abiotic stresses (e.g. salt, cold and ABA). Positive modulator of seedling growth and survival in response to drought and heat, but counteracts tolerance to salt. The sequence is that of Alkylated DNA repair protein ALKBH6 homolog from Arabidopsis thaliana (Mouse-ear cress).